Reading from the N-terminus, the 911-residue chain is Protein argonaute 4B (911 aa).

2 disordered regions span residues 1–51 and 149–171; these read MDAH…RPGL and KTAANGSPGGNDSPGGSDRKRVR. Positions 281–396 constitute a PAZ domain; the sequence is PVIDFLLANQ…FPIELCSLIP (116 aa). A Piwi domain is found at 565 to 872; the sequence is FLLCLLPERK…AAAQVGTFLK (308 aa).

The protein belongs to the argonaute family. Ago subfamily.

Its function is as follows. Probably involved in the RNA silencing pathway. May bind to short RNAs such as microRNAs (miRNAs) or short interfering RNAs (siRNAs), and represses the translation of mRNAs which are complementary to them. This Oryza sativa subsp. japonica (Rice) protein is Protein argonaute 4B (AGO4B).